The chain runs to 142 residues: Hemoglobin subunit alpha (142 aa).

Ser-1 is subject to N-acetylserine. The Globin domain occupies 1-142; sequence SLSDKDKAAV…VALALAERYR (142 aa). Position 59 (His-59) interacts with O2. His-88 is a binding site for heme b.

The protein belongs to the globin family. Hb1 is a heterotetramer of two alpha chains and two beta-1 chains, while Hb2 is a heterotetramer of two alpha chains and two beta-2 chains. In terms of tissue distribution, red blood cells.

Functionally, involved in oxygen transport from gills to the various peripheral tissues. The protein is Hemoglobin subunit alpha (hba) of Cygnodraco mawsoni (Antarctic dragonfish).